Reading from the N-terminus, the 352-residue chain is Peptide chain release factor 1 (352 aa).

Q229 is modified (N5-methylglutamine).

It belongs to the prokaryotic/mitochondrial release factor family. Post-translationally, methylated by PrmC. Methylation increases the termination efficiency of RF1.

The protein localises to the cytoplasm. Functionally, peptide chain release factor 1 directs the termination of translation in response to the peptide chain termination codons UAG and UAA. In Granulibacter bethesdensis (strain ATCC BAA-1260 / CGDNIH1), this protein is Peptide chain release factor 1.